A 202-amino-acid chain; its full sequence is Recoverin (202 aa).

Gly2 carries the N-myristoyl glycine lipid modification. EF-hand domains follow at residues 24 to 59 (TEEE…FFPE), 61 to 96 (DPKA…TSAG), 97 to 132 (KTNQ…IFKM), and 147 to 182 (TPEK…NKEI). Position 39 is a cysteine sulfenic acid (-SOH) (Cys39). The Ca(2+) site is built by Asp74, Asn76, Asp78, Thr80, Glu85, Asp110, Asp112, Asn114, Thr116, and Glu121. The interaction with GRK1 stretch occupies residues 189–192 (EPQK). Residues 191 to 202 (QKVKEKLKEKKL) are modulates EF-hand 3 domain calcium binding affinity.

The protein belongs to the recoverin family. In terms of assembly, homodimer; disulfide-linked. Homodimerization is caused by prolonged intense illumination. May form a complex composed of RHO, GRK1 and RCVRN in a Ca(2+)-dependent manner; RCVRN prevents the interaction between GRK1 and RHO. Interacts (via C-terminus) with GRK1 (via N-terminus); the interaction is Ca(2+)-dependent. Post-translationally, the N-terminal glycine is linked to one of four different types of acyl groups. The most abundant is myristoleate (14:1), but 14:0, 14:2, and 12:0 acyl residues are also present. The Ca(2+) induced exposure of the myristoyl group, known as the calcium-myristoyl switch, promotes RCVRN binding to the photoreceptor cell membranes only when intracellular Ca(2+) concentration is high. Oxidation on Cys-39 occurs in response to prolonged intense illumination and results in the formation of disulfide homodimers, and to a lesser extent disulfide-linked heterodimers. In terms of tissue distribution, expressed in the retina (at protein level). Expressed in the pineal gland (at protein level).

It localises to the photoreceptor inner segment. Its subcellular location is the cell projection. It is found in the cilium. The protein localises to the photoreceptor outer segment. The protein resides in the photoreceptor outer segment membrane. It localises to the perikaryon. Functionally, acts as a calcium sensor and regulates phototransduction of cone and rod photoreceptor cells. Modulates light sensitivity of cone photoreceptor in dark and dim conditions. In response to high Ca(2+) levels induced by low light levels, prolongs RHO/rhodopsin activation in rod photoreceptor cells by binding to and inhibiting GRK1-mediated phosphorylation of RHO/rhodopsin. Plays a role in scotopic vision/enhances vision in dim light by enhancing signal transfer between rod photoreceptors and rod bipolar cells. Improves rod photoreceptor sensitivity in dim light and mediates response of rod photoreceptors to facilitate detection of change and motion in bright light. The chain is Recoverin (RCVRN) from Bos taurus (Bovine).